Consider the following 150-residue polypeptide: Protein A151R (150 aa).

Belongs to the asfivirus A151R family. Monomer. Homodimer. Interacts with protein B119L. Interacts with membrane protein E248R. Requires Zn(2+) as cofactor.

In terms of biological role, may participate in a redox cascade for the formation of disulfide bonds in viral proteins. This chain is Protein A151R, found in African swine fever virus (isolate Pig/Kenya/KEN-50/1950) (ASFV).